We begin with the raw amino-acid sequence, 476 residues long: Aspartyl/glutamyl-tRNA(Asn/Gln) amidotransferase subunit B (476 aa).

Belongs to the GatB/GatE family. GatB subfamily. As to quaternary structure, heterotrimer of A, B and C subunits.

It carries out the reaction L-glutamyl-tRNA(Gln) + L-glutamine + ATP + H2O = L-glutaminyl-tRNA(Gln) + L-glutamate + ADP + phosphate + H(+). It catalyses the reaction L-aspartyl-tRNA(Asn) + L-glutamine + ATP + H2O = L-asparaginyl-tRNA(Asn) + L-glutamate + ADP + phosphate + 2 H(+). Its function is as follows. Allows the formation of correctly charged Asn-tRNA(Asn) or Gln-tRNA(Gln) through the transamidation of misacylated Asp-tRNA(Asn) or Glu-tRNA(Gln) in organisms which lack either or both of asparaginyl-tRNA or glutaminyl-tRNA synthetases. The reaction takes place in the presence of glutamine and ATP through an activated phospho-Asp-tRNA(Asn) or phospho-Glu-tRNA(Gln). The chain is Aspartyl/glutamyl-tRNA(Asn/Gln) amidotransferase subunit B from Clostridium botulinum (strain Loch Maree / Type A3).